The sequence spans 164 residues: Large ribosomal subunit protein uL15 (164 aa).

The segment covering 1 to 14 has biased composition (polar residues); the sequence is MKLNEIQDNPGSSK. Residues 1–35 are disordered; it reads MKLNEIQDNPGSSKSRMRVGRGIGSGKGKTCGRGV. The span at 21–35 shows a compositional bias: gly residues; the sequence is RGIGSGKGKTCGRGV.

The protein belongs to the universal ribosomal protein uL15 family. Part of the 50S ribosomal subunit.

Binds to the 23S rRNA. This Methylocella silvestris (strain DSM 15510 / CIP 108128 / LMG 27833 / NCIMB 13906 / BL2) protein is Large ribosomal subunit protein uL15.